Consider the following 101-residue polypeptide: Large ribosomal subunit protein bL21 (101 aa).

This sequence belongs to the bacterial ribosomal protein bL21 family. Part of the 50S ribosomal subunit. Contacts protein L20.

In terms of biological role, this protein binds to 23S rRNA in the presence of protein L20. The protein is Large ribosomal subunit protein bL21 of Corynebacterium aurimucosum (strain ATCC 700975 / DSM 44827 / CIP 107346 / CN-1) (Corynebacterium nigricans).